A 124-amino-acid chain; its full sequence is Small ribosomal subunit protein uS12 (124 aa).

The disordered stretch occupies residues 1–24 (MPTINQLVRQGRKKSVKKTNTPAL). Aspartate 89 bears the 3-methylthioaspartic acid mark.

The protein belongs to the universal ribosomal protein uS12 family. As to quaternary structure, part of the 30S ribosomal subunit. Contacts proteins S8 and S17. May interact with IF1 in the 30S initiation complex.

Functionally, with S4 and S5 plays an important role in translational accuracy. In terms of biological role, interacts with and stabilizes bases of the 16S rRNA that are involved in tRNA selection in the A site and with the mRNA backbone. Located at the interface of the 30S and 50S subunits, it traverses the body of the 30S subunit contacting proteins on the other side and probably holding the rRNA structure together. The combined cluster of proteins S8, S12 and S17 appears to hold together the shoulder and platform of the 30S subunit. This is Small ribosomal subunit protein uS12 from Desulfotalea psychrophila (strain LSv54 / DSM 12343).